Consider the following 1143-residue polypeptide: Probable ATP-dependent RNA helicase DHX34 (1143 aa).

Disordered regions lie at residues 1–24 and 75–94; these read MPPPRTREGRDRRDHHRAPSEEEA and TSRKEEKDPGQPKHSIPALA. Positions 76-85 are enriched in basic and acidic residues; the sequence is SRKEEKDPGQ. The Helicase ATP-binding domain maps to 172–332; the sequence is LQTLKEHQVV…FSNAPVVQVP (161 aa). Position 185–192 (185–192) interacts with ATP; that stretch reads GDTGCGKS. Positions 279–282 match the DEAH box motif; that stretch reads DEVH. A Helicase C-terminal domain is found at 368-536; that stretch reads SIDHKYPPEE…SLVLQMKSMS (169 aa). The interval 701 to 955 is negatively regulates interaction with UPF1; sequence QAAQVGDSYS…LRARWESALD (255 aa). The tract at residues 724 to 766 is disordered; it reads LKRQHEEGAGRRRKVLRLQEEQDGGSSDEDRAGPAPPGASDGV. A phosphoserine mark is found at Ser-749 and Ser-750. Residues 810–1143 form a required for phosphorylation of UPF1. Not required for interaction with UPF1 region; sequence PQLAVPDAFN…EVLRHRKQHV (334 aa). The tract at residues 957 to 1143 is required for the interaction with SMG1 and subsequent phosphorylation of UPF1; it reads QLAHQAQQQL…EVLRHRKQHV (187 aa).

The protein belongs to the DEAD box helicase family. DEAH subfamily. As to quaternary structure, forms a complex with RUVBL1 and RUVBL2. Part of a complex composed of SMG1, DHX34 and UPF1; within the complex DHX34 acts as a scaffolding protein to facilitate SMG1 phosphorylation of UPF1. Interacts with UPF1, MOV10, EIF4A3, XRN2, SMG6, SMG7, SMG9, UPF3A, UPF3B, CASC3/MLN51, XRN1, DIS3 and DCP1A; the interactions are RNA-independent. Interacts with NCBP1/CPB80; the interaction is RNA-dependent. Interacts (via C-terminus) with SMG1; the interaction is RNA-independent. As to expression, expressed in whole blood, testis and spleen. Also expressed in the brain.

The catalysed reaction is ATP + H2O = ADP + phosphate + H(+). Functionally, probable ATP-binding RNA helicase required for nonsense-mediated decay (NMD) degradation of mRNA transcripts containing premature stop codons. Promotes the phosphorylation of UPF1 along with its interaction with key NMD pathway proteins UPF2 and EIF4A3. Interaction with the RUVBL1-RUVBL2 complex results in loss of nucleotide binding ability and ATP hydrolysis of the complex. Negatively regulates the nucleotide binding ability and ATP hydrolysis of the RUVBL1-RUVBL2 complex via induction of N-terminus conformation changes of the RUVBL2 subunits. The sequence is that of Probable ATP-dependent RNA helicase DHX34 from Homo sapiens (Human).